An 826-amino-acid chain; its full sequence is E3 ubiquitin ligase PARAQUAT TOLERANCE 3 (826 aa).

Residues I3–P76 form the DWNN domain. A CCHC-type zinc finger spans residues C203–C216. A Phosphoserine modification is found at S278. The RING-type; degenerate zinc-finger motif lies at C288 to C326. Polar residues-rich tracts occupy residues S356–Q365, P396–K406, and N435–P454. Disordered stretches follow at residues S356–K406, N435–Y488, and H585–A826. At S397 the chain carries Phosphoserine. A compositionally biased stretch (basic and acidic residues) spans M588–R624. The span at I625–P635 shows a compositional bias: polar residues. Residues D651 to S667 are compositionally biased toward basic and acidic residues. Short sequence motifs (nuclear localization signal) lie at residues S668–P675 and D695–R702. The segment covering R680–R706 has biased composition (basic and acidic residues). Over residues F790 to R799 the composition is skewed to basic residues. The residue at position 800 (S800) is a Phosphoserine. Residues G809–A826 show a composition bias toward basic and acidic residues.

As to quaternary structure, interacts with PRMT13/PRMT4B in the nucleus. Expressed constitutively in both shoot and root tissues.

It localises to the nucleus. It catalyses the reaction S-ubiquitinyl-[E2 ubiquitin-conjugating enzyme]-L-cysteine + [acceptor protein]-L-lysine = [E2 ubiquitin-conjugating enzyme]-L-cysteine + N(6)-ubiquitinyl-[acceptor protein]-L-lysine.. Functionally, E3 ubiquitin ligase acting as a negative regulator of oxidative stress tolerance, probably by mediating 26S proteasome-mediated degradation of PRMT13/PRMT4B, thus preventing APX1 and GPX1 accumulation via the reduction of histone H3 methylation (H3R17me2a). Confers sensitivity to cadmium CdCl(2) and salt NaCl stresses. The sequence is that of E3 ubiquitin ligase PARAQUAT TOLERANCE 3 from Arabidopsis thaliana (Mouse-ear cress).